The sequence spans 194 residues: MHQIYSSDVSSITSKSSIAKAEIITMEEEQQRQSCCTWFHSLKVQIWIAWLGVSAGVMAGTVFAIQYQNWIAVTMCFISSGFATLVLHLHLAYKKTQMAGWSETRLRCLAAVGATVSFLSFIAMVFCLVVAGIEHQTLDKQGLMGANLWIAAVWFFMTSKWSALTWRFARKYRAFCEESQPLLAAAPPEYSVTI.

4 consecutive transmembrane segments (helical) span residues 45 to 65 (QIWI…VFAI), 71 to 91 (IAVT…HLHL), 113 to 133 (GATV…VAGI), and 143 to 163 (LMGA…KWSA). Positions 182 to 183 (LL) match the Di-leucine motif motif.

Belongs to the HRG family. As to expression, specifically expressed in the intestinal cells in larvae and adults.

It is found in the endosome membrane. The protein resides in the lysosome membrane. Heme transporter that regulates intracellular heme availability through the endosomal or lysosomal compartment. The chain is Heme transporter hrg-1 (hrg-1) from Caenorhabditis elegans.